Here is a 352-residue protein sequence, read N- to C-terminus: Phosphoribosylformylglycinamidine cyclo-ligase (352 aa).

The protein belongs to the AIR synthase family.

The protein localises to the cytoplasm. It catalyses the reaction 2-formamido-N(1)-(5-O-phospho-beta-D-ribosyl)acetamidine + ATP = 5-amino-1-(5-phospho-beta-D-ribosyl)imidazole + ADP + phosphate + H(+). The protein operates within purine metabolism; IMP biosynthesis via de novo pathway; 5-amino-1-(5-phospho-D-ribosyl)imidazole from N(2)-formyl-N(1)-(5-phospho-D-ribosyl)glycinamide: step 2/2. In Hahella chejuensis (strain KCTC 2396), this protein is Phosphoribosylformylglycinamidine cyclo-ligase.